The primary structure comprises 41 residues: Large ribosomal subunit protein bL36 (41 aa).

This sequence belongs to the bacterial ribosomal protein bL36 family.

This chain is Large ribosomal subunit protein bL36, found in Bradyrhizobium diazoefficiens (strain JCM 10833 / BCRC 13528 / IAM 13628 / NBRC 14792 / USDA 110).